We begin with the raw amino-acid sequence, 79 residues long: Three-finger toxin A2 (79 aa).

The signal sequence occupies residues 1 to 21 (MKTLLLTLVVVTIVCLDLGNS). Cystine bridges form between Cys24-Cys41, Cys34-Cys59, Cys63-Cys71, and Cys72-Cys77.

Belongs to the three-finger toxin family. Short-chain subfamily. As to expression, expressed by the venom gland.

It is found in the secreted. This Micrurus laticollaris (Balsas coral snake) protein is Three-finger toxin A2.